An 83-amino-acid polypeptide reads, in one-letter code: Small ribosomal subunit protein bS16 (83 aa).

It belongs to the bacterial ribosomal protein bS16 family.

This chain is Small ribosomal subunit protein bS16, found in Borrelia hermsii (strain HS1 / DAH).